Consider the following 881-residue polypeptide: Valine--tRNA ligase (881 aa).

The short motif at 49–59 (PNVTGKLHLGH) is the 'HIGH' region element. The 'KMSKS' region motif lies at 526–530 (KMSKS). An ATP-binding site is contributed by Lys-529. Residues 810 to 881 (LADLINLDEE…VRQRLADLEK (72 aa)) adopt a coiled-coil conformation.

This sequence belongs to the class-I aminoacyl-tRNA synthetase family. ValS type 1 subfamily. Monomer.

The protein resides in the cytoplasm. The catalysed reaction is tRNA(Val) + L-valine + ATP = L-valyl-tRNA(Val) + AMP + diphosphate. Its function is as follows. Catalyzes the attachment of valine to tRNA(Val). As ValRS can inadvertently accommodate and process structurally similar amino acids such as threonine, to avoid such errors, it has a 'posttransfer' editing activity that hydrolyzes mischarged Thr-tRNA(Val) in a tRNA-dependent manner. The chain is Valine--tRNA ligase from Bacillus thuringiensis subsp. konkukian (strain 97-27).